A 589-amino-acid polypeptide reads, in one-letter code: Ufm1-specific protease (589 aa).

The disordered stretch occupies residues 1–22 (MTNSQTVSLIGPTQMAPQSTPP). Active-site residues include Cys-421, Asp-545, and His-547.

The protein belongs to the peptidase C78 family. In terms of assembly, interacts with odr-4. In terms of tissue distribution, expressed in head and tail neurons. Expressed in the amphid head neurons ADL, ASI, ASH, ASJ, ASG, ADF, ASK, AWA, AWB, AWC, and in two tail neurons, the phasmid tail neurons PHA and PHB.

Its subcellular location is the endoplasmic reticulum membrane. It localises to the cytoplasm. The protein localises to the perinuclear region. Thiol protease which recognizes and hydrolyzes the peptide bond at the C-terminal Gly of ufm-1, a ubiquitin-like modifier protein bound to a number of target proteins. Required, with oct-4, for the localization of a subset of 7 transmembrane domain odorant receptors, including odr-10, to the cilia of olfactory neurons AWA and AWC. Operates in aggregation behavior, and responses to oxygen levels. The sequence is that of Ufm1-specific protease from Caenorhabditis elegans.